We begin with the raw amino-acid sequence, 1588 residues long: RB1-inducible coiled-coil protein 1 (1588 aa).

Ser222, Ser229, and Ser237 each carry phosphoserine. Position 238 is a phosphothreonine (Thr238). Residues Ser243, Ser253, Ser257, and Ser261 each carry the phosphoserine modification. The Nuclear localization signal signature appears at 565-568 (KPRK). A phosphoserine mark is found at Ser623, Ser646, Ser649, Ser652, Ser733, Ser1087, Ser1366, and Ser1478. The tract at residues 638–674 (QKVSTSQASPQSAASPRIESTTGITTTTSPKTPPPLT) is disordered. Low complexity predominate over residues 643 to 667 (SQASPQSAASPRIESTTGITTTTSP). Residues 730–736 (DFMSAVN) carry the FFAT motif. 2 coiled-coil regions span residues 858 to 1393 (LKEK…TSSF) and 1440 to 1479 (SVQENMLSEEKQRIMLLERTLQLKEEENKRLNQRLMSQSL).

Part of a complex containing ATG13/KIAA0652, ULK1 and RB1CC1. This complex associates with ATG101. Interacts with PTK2/FAK1 and PTK2B/PYK2. Interacts with GABARAP and GABARAPL1. Interacts with ATG16L1; the interaction is required for ULK1 complex-dependent autophagy. Interacts with RNF111, SKI and SMAD7. Interacts with COP1 in the cytoplasm of proliferating cells in response to UV stimulation. Interacts with TP53. Interacts with C9orf72. Interacts with WDR45B. Interacts with ATG13; this interaction is increased in the absence of TMEM39A. Interacts with WIPI2. Interacts with TAX1BP1. Interacts (via phosphorylated FFAT motif) with MOSPD2. Post-translationally, phosphorylation at Ser-733 of the FFAT motif activates interaction with MOSPD2. In terms of tissue distribution, expressed abundantly in heart and testis, and moderately in kidney, liver and skeletal muscles. Very low expression levels in lung and spleen. Colocalizes with RB1 in various tissues.

It localises to the nucleus. The protein localises to the cytoplasm. The protein resides in the cytosol. It is found in the preautophagosomal structure. Its subcellular location is the lysosome. In terms of biological role, involved in autophagy. Regulates early events but also late events of autophagosome formation through direct interaction with Atg16L1. Required for the formation of the autophagosome-like double-membrane structure that surrounds the Salmonella-containing vacuole (SCV) during S.typhimurium infection and subsequent xenophagy. Involved in repair of DNA damage caused by ionizing radiation, which subsequently improves cell survival by decreasing apoptosis. Inhibits PTK2/FAK1 and PTK2B/PYK2 kinase activity, affecting their downstream signaling pathways. Plays a role as a modulator of TGF-beta-signaling by restricting substrate specificity of RNF111. Functions as a DNA-binding transcription factor. Is a potent regulator of the RB1 pathway through induction of RB1 expression. Plays a crucial role in muscular differentiation. Plays an indispensable role in fetal hematopoiesis and in the regulation of neuronal homeostasis. In Mus musculus (Mouse), this protein is RB1-inducible coiled-coil protein 1.